The following is a 328-amino-acid chain: Nucleotide-binding protein Blon_1085/BLIJ_1109 (328 aa).

The segment at 1-33 is disordered; sequence MSQQTTIRDTGEAAATNAPANSATSTSTPDNQP. The segment covering 13–29 has biased composition (low complexity); sequence AAATNAPANSATSTSTP. Residue 46–53 coordinates ATP; the sequence is GMSGAGRS. A GTP-binding site is contributed by 101-104; the sequence is DVRS.

The protein belongs to the RapZ-like family.

Its function is as follows. Displays ATPase and GTPase activities. In Bifidobacterium longum subsp. infantis (strain ATCC 15697 / DSM 20088 / JCM 1222 / NCTC 11817 / S12), this protein is Nucleotide-binding protein Blon_1085/BLIJ_1109.